A 58-amino-acid polypeptide reads, in one-letter code: Small ribosomal subunit protein bS21 (58 aa).

Positions E36 to F58 are disordered. Basic residues predominate over residues V43 to F58.

Belongs to the bacterial ribosomal protein bS21 family.

The chain is Small ribosomal subunit protein bS21 from Streptococcus uberis (strain ATCC BAA-854 / 0140J).